The chain runs to 441 residues: UPF0761 membrane protein RSc1559 (441 aa).

6 helical membrane passes run 44 to 64 (VLSL…FPMF), 101 to 121 (GLTA…MLTV), 141 to 161 (VLVF…SLSV), 182 to 202 (VVVG…LYVF), 207 to 227 (LVAW…FEIA), and 248 to 268 (FAAL…TLLG).

Belongs to the UPF0761 family.

Its subcellular location is the cell inner membrane. This chain is UPF0761 membrane protein RSc1559, found in Ralstonia nicotianae (strain ATCC BAA-1114 / GMI1000) (Ralstonia solanacearum).